A 556-amino-acid chain; its full sequence is Zinc finger protein 18 (556 aa).

The SCAN box domain maps to 41-123 (RQLFRQFRYQ…TLVESLKGDP (83 aa)). The interval 169–195 (QDLPLQNTSSAPGELLSHGVKEESDLE) is disordered. One can recognise a KRAB domain in the interval 218 to 291 (EVGTALLPSL…HLHSAEKMAR (74 aa)). 5 consecutive C2H2-type zinc fingers follow at residues 415–437 (PTCRECGKTFYRNSQLVFHQRTH), 443–465 (FHCRICKKAFLRSSDFVKHQRTH), 471–493 (CKCDYCGKGFSDFSGLRHHEKIH), 499–521 (YKCPICEKSFIQRSNFNRHQRVH), and 527–549 (YKCTHCGKRFSWSSSLDKHQRSH).

Belongs to the krueppel C2H2-type zinc-finger protein family.

It is found in the nucleus. Its function is as follows. May be involved in transcriptional regulation. The polypeptide is Zinc finger protein 18 (Znf18) (Rattus norvegicus (Rat)).